The primary structure comprises 442 residues: Adenylosuccinate synthetase (442 aa).

GTP is bound by residues 16–22 and 44–46; these read GDEGKGK and GHT. D17 (proton acceptor) is an active-site residue. Mg(2+) contacts are provided by D17 and G44. IMP is bound by residues 17–20, 42–45, T133, R147, Q228, T243, and R307; these read DEGK and NAGH. The Proton donor role is filled by H45. 303-309 contributes to the substrate binding site; it reads AVTGRPR. GTP-binding positions include R309, 335–337, and 417–419; these read KLD and STG.

It belongs to the adenylosuccinate synthetase family. As to quaternary structure, homodimer. Mg(2+) serves as cofactor.

It localises to the cytoplasm. It catalyses the reaction IMP + L-aspartate + GTP = N(6)-(1,2-dicarboxyethyl)-AMP + GDP + phosphate + 2 H(+). Its pathway is purine metabolism; AMP biosynthesis via de novo pathway; AMP from IMP: step 1/2. Functionally, plays an important role in the de novo pathway of purine nucleotide biosynthesis. Catalyzes the first committed step in the biosynthesis of AMP from IMP. In Koribacter versatilis (strain Ellin345), this protein is Adenylosuccinate synthetase.